Here is a 339-residue protein sequence, read N- to C-terminus: ATPase GET3 (339 aa).

37 to 44 provides a ligand contact to ATP; that stretch reads KGGVGKTT. Residue Asp-66 is part of the active site. Glu-237 and Asn-264 together coordinate ATP. Residues Cys-275 and Cys-278 each coordinate Zn(2+).

Belongs to the arsA ATPase family. In terms of assembly, homodimer.

It is found in the cytoplasm. Its subcellular location is the endoplasmic reticulum. In terms of biological role, ATPase required for the post-translational delivery of tail-anchored (TA) proteins to the endoplasmic reticulum. Recognizes and selectively binds the transmembrane domain of TA proteins in the cytosol. This complex then targets to the endoplasmic reticulum by membrane-bound receptors, where the tail-anchored protein is released for insertion. This process is regulated by ATP binding and hydrolysis. ATP binding drives the homodimer towards the closed dimer state, facilitating recognition of newly synthesized TA membrane proteins. ATP hydrolysis is required for insertion. Subsequently, the homodimer reverts towards the open dimer state, lowering its affinity for the membrane-bound receptor, and returning it to the cytosol to initiate a new round of targeting. The polypeptide is ATPase GET3 (Rhodotorula glutinis (Yeast)).